The primary structure comprises 1243 residues: Zinc finger protein ZFAT (1243 aa).

Residues 12-35 (FMCKCCNLFSPNQSELLSHVSEKH) form a C2H2-type 1 zinc finger. Disordered regions lie at residues 51 to 116 (PLST…PSSL) and 147 to 189 (GEAG…GKEA). Residues 70-81 (MKRKRGRPKGST) show a composition bias toward basic residues. The segment at 116–141 (LECSKCCRKFSNTRQLRKHICIIVLN) adopts a C2H2-type 2; degenerate zinc-finger fold. Residues 156–189 (ELEKKCKEDDREKASKRPRSQKTEKVQKISGKEA) show a composition bias toward basic and acidic residues. 7 consecutive C2H2-type zinc fingers follow at residues 271–293 (FTCE…LRIH), 299–321 (YKCP…LRKH), 326–349 (FACD…ERVH), 354–377 (QHCR…RDAH), 404–426 (YDCH…MLVH), 432–454 (FACE…VRKH), and 458–481 (YVCA…KEVH). Zn(2+) contacts are provided by cysteine 273, cysteine 276, histidine 289, histidine 293, cysteine 301, cysteine 304, histidine 317, histidine 321, cysteine 328, cysteine 331, histidine 344, histidine 349, cysteine 356, cysteine 359, histidine 372, histidine 377, cysteine 406, cysteine 409, histidine 422, and histidine 426. Cysteine 460, cysteine 463, histidine 476, and histidine 481 together coordinate Zn(2+). 3 disordered regions span residues 534-570 (EACP…AEST), 603-625 (TSSA…SSVQ), and 638-705 (AQSA…CKAA). Over residues 610–620 (AAPEKPPDMQH) the composition is skewed to basic and acidic residues. Residues 638-650 (AQSAGSDQESHGA) show a composition bias toward polar residues. 10 consecutive C2H2-type zinc fingers follow at residues 742–764 (LECE…VRTH), 770–793 (YYCS…IQKH), 798–822 (LKCP…LKVH), 830–853 (YSCP…KTNH), 880–903 (MKCP…IWAH), 909–931 (FKCS…MNRH), 937–959 (HLCD…KLLH), 966–988 (FKCT…MEQH), 994–1017 (FRCA…NRKH), and 1041–1064 (LKCP…KNKH). Positions 772, 775, 788, 793, 800, 805, 818, 822, 832, 835, 848, 853, 882, 885, 899, 903, 911, 914, 927, 931, 939, 942, 955, and 958 each coordinate Zn(2+).

Isoform 1 is strongly expressed in placenta, spleen, kidney, testis and peripheral blood leukocytes. Expressed in CD4+ and CD8+ T-cells, CD19+ B-cells and CB14+ monocytes. Isoform 3 is strongly expressed in placenta, ovary, tonsil, CD19+ B-cells and CD14+ monocytes.

It localises to the nucleus. Its subcellular location is the cytoplasm. The protein resides in the cytosol. May be involved in transcriptional regulation. Overexpression causes down-regulation of a number of genes involved in the immune response. Some genes are also up-regulated. The chain is Zinc finger protein ZFAT (ZFAT) from Homo sapiens (Human).